The following is a 411-amino-acid chain: ATP phosphoribosyltransferase 1, chloroplastic (411 aa).

Over residues methionine 1 to tyrosine 12 the composition is skewed to polar residues. The interval methionine 1–proline 27 is disordered. The N-terminal 49 residues, methionine 1–cysteine 49, are a transit peptide targeting the chloroplast. A compositionally biased stretch (low complexity) spans proline 13–isoleucine 24. Residue valine 50 is modified to N-acetylvaline.

Belongs to the ATP phosphoribosyltransferase family. Long subfamily. Mg(2+) is required as a cofactor. As to expression, expressed in leaves and at lower levels in roots (at protein level).

The protein localises to the plastid. It is found in the chloroplast. It carries out the reaction 1-(5-phospho-beta-D-ribosyl)-ATP + diphosphate = 5-phospho-alpha-D-ribose 1-diphosphate + ATP. Its pathway is amino-acid biosynthesis; L-histidine biosynthesis; L-histidine from 5-phospho-alpha-D-ribose 1-diphosphate: step 1/9. Its activity is regulated as follows. Feedback inhibited by L-histidine. Catalyzes the condensation of ATP and 5-phosphoribose 1-diphosphate to form N'-(5'-phosphoribosyl)-ATP (PR-ATP). The sequence is that of ATP phosphoribosyltransferase 1, chloroplastic (HISN1A) from Arabidopsis thaliana (Mouse-ear cress).